The chain runs to 134 residues: RxLR effector protein Avh238 (134 aa).

The first 21 residues, 1–21 (MRGVFFVAVAVAIFARSSAEA), serve as a signal peptide directing secretion. Positions 44 to 68 (RFLRVADSEDDDLAAPADDGKTEER) match the RxLR-dEER motif. The segment at 50-72 (DSEDDDLAAPADDGKTEERAPKF) is disordered. A compositionally biased stretch (basic and acidic residues) spans 61–70 (DDGKTEERAP).

This sequence belongs to the RxLR effector family.

The protein localises to the secreted. Its subcellular location is the host cytoplasm. The protein resides in the host nucleus. Its function is as follows. Effector that, due to the lack of a histidine residue at position 79, is not able to induce cell death in tomato, tobacco, eggplant, potato, or in A.thaliana. In Phytophthora sojae (Soybean stem and root rot agent), this protein is RxLR effector protein Avh238.